The primary structure comprises 145 residues: Group IID secretory phospholipase A2 (145 aa).

The N-terminal stretch at 1 to 20 (MELALLCGLVVMAGVIPIQG) is a signal peptide. 7 disulfides stabilise this stretch: C46–C138, C48–C64, C63–C118, C69–C145, C70–C111, C79–C104, and C97–C109. The Ca(2+) site is built by H47, G49, and G51. The active site involves H67. D68 contacts Ca(2+). N-linked (GlcNAc...) asparagine glycosylation occurs at N89. The active site involves D112.

It belongs to the phospholipase A2 family. Ca(2+) serves as cofactor. Highly expressed in pancreas and spleen and less abundantly in colon, thymus, placenta, small intestine, and prostate.

The protein resides in the secreted. It catalyses the reaction a 1,2-diacyl-sn-glycero-3-phosphoethanolamine + H2O = a 1-acyl-sn-glycero-3-phosphoethanolamine + a fatty acid + H(+). The catalysed reaction is 1-hexadecanoyl-2-(9Z-octadecenoyl)-sn-glycero-3-phosphoethanolamine + H2O = 1-hexadecanoyl-sn-glycero-3-phosphoethanolamine + (9Z)-octadecenoate + H(+). It carries out the reaction 1-hexadecanoyl-2-(9Z,12Z-octadecadienoyl)-sn-glycero-3-phosphoethanolamine + H2O = 1-hexadecanoyl-sn-glycero-3-phosphoethanolamine + (9Z,12Z)-octadecadienoate + H(+). The enzyme catalyses 1,2-dihexadecanoyl-sn-glycero-3-phospho-(1'-sn-glycerol) + H2O = 1-hexadecanoyl-sn-glycero-3-phospho-(1'-sn-glycerol) + hexadecanoate + H(+). It catalyses the reaction 1-hexadecanoyl-2-(9Z-octadecenoyl)-sn-glycero-3-phospho-(1'-sn-glycerol) + H2O = 1-hexadecanoyl-sn-glycero-3-phospho-(1'-sn-glycerol) + (9Z)-octadecenoate + H(+). The catalysed reaction is a 1,2-diacyl-sn-glycero-3-phosphocholine + H2O = a 1-acyl-sn-glycero-3-phosphocholine + a fatty acid + H(+). It carries out the reaction 1,2-dihexadecanoyl-sn-glycero-3-phosphocholine + H2O = 1-hexadecanoyl-sn-glycero-3-phosphocholine + hexadecanoate + H(+). The enzyme catalyses 1-hexadecanoyl-2-(9Z-octadecenoyl)-sn-glycero-3-phosphocholine + H2O = 1-hexadecanoyl-sn-glycero-3-phosphocholine + (9Z)-octadecenoate + H(+). It catalyses the reaction 1-hexadecanoyl-2-(9Z,12Z-octadecadienoyl)-sn-glycero-3-phosphocholine + H2O = (9Z,12Z)-octadecadienoate + 1-hexadecanoyl-sn-glycero-3-phosphocholine + H(+). The catalysed reaction is 1-hexadecanoyl-2-(4Z,7Z,10Z,13Z,16Z,19Z-docosahexaenoyl)-sn-glycero-3-phosphocholine + H2O = (4Z,7Z,10Z,13Z,16Z,19Z)-docosahexaenoate + 1-hexadecanoyl-sn-glycero-3-phosphocholine + H(+). Functionally, secretory calcium-dependent phospholipase A2 that primarily targets extracellular lipids, exerting anti-inflammatory and immunosuppressive functions. Hydrolyzes the ester bond of the fatty acyl group attached at sn-2 position of phospholipids (phospholipase A2 activity) with preference for phosphatidylethanolamines and phosphatidylglycerols over phosphatidylcholines. In draining lymph nodes, selectively hydrolyzes diacyl and alkenyl forms of phosphatidylethanolamines, releasing omega-3 polyunsaturated fatty acids (PUFAs) such as eicosapentaenoate and docosahexaenoate that are precursors of the anti-inflammatory lipid mediators, resolvins. During the resolution phase of acute inflammation drives docosahexaenoate-derived resolvin D1 synthesis, which suppresses dendritic cell activation and T-helper 1 immune response. May act in an autocrine and paracrine manner. Via a mechanism independent of its catalytic activity, promotes differentiation of regulatory T cells (Tregs) and participates in the maintenance of immune tolerance. May contribute to lipid remodeling of cellular membranes and generation of lipid mediators involved in pathogen clearance. Displays bactericidal activity against Gram-positive bacteria by directly hydrolyzing phospholipids of the bacterial membrane. The polypeptide is Group IID secretory phospholipase A2 (PLA2G2D) (Homo sapiens (Human)).